An 80-amino-acid polypeptide reads, in one-letter code: Protein FAM229B (80 aa).

Residues 1–44 (MPFRFGTQPRRFPVEGGDSSIGLEPGLSSSAACNGKEMSPTRQL) form a disordered region.

The protein belongs to the FAM229 family.

This Macaca fascicularis (Crab-eating macaque) protein is Protein FAM229B (FAM229B).